The following is a 134-amino-acid chain: Small ribosomal subunit protein uS9 (134 aa).

Residues 113–134 are disordered; that stretch reads REVERKKYGLKKARRAPQFSKR. The span at 120–134 shows a compositional bias: basic residues; sequence YGLKKARRAPQFSKR.

The protein belongs to the universal ribosomal protein uS9 family.

The chain is Small ribosomal subunit protein uS9 from Thermotoga petrophila (strain ATCC BAA-488 / DSM 13995 / JCM 10881 / RKU-1).